We begin with the raw amino-acid sequence, 719 residues long: MNKDEIKNLTALEAESELEWLAKEIARHDVLYNRDDQPEISDAEYDALRRRNAEIEALFPELIRSDSPSHKIGAPVSEKFEKSVHAQAMLSLDNAFSSEDICEFIVRIRRFLRLPATQILEMTAEPKIDGLSLSLRYEKGRLVCAATRGDGYIGENVTANARTISDIPKVLRGEFPDIIEVRGEVYMRRENFQALNMSQQEKGKFVFANPRNAAAGSLRQLDPRITASRKLHFFAYACGEVSETFAASQMEMMKKLKEYGFFINPLTKSFKTLEEIISYYHDIEECRHSLSYDIDGIVYKVNDLKLQMRLGFVSRSPRWAVAHKFPAEKAMALLEGIDIQVGRTGALTPVARLAPITIGGVVVTNASLHNEDYIKGIGHKGESIREGRDIRVGDTVIVQRAGDVIPQIVDIIAEKRPKGASAFVFPHLCPACGSHAVREVGESVRRCTGGLICPAQAIERIRHFVSRNAFDIEGLGKKQVEFFFHIQDEALCIHTPADIFTLQRRQEKALVRLENMEGFGTVSVRKLYNAINMRRKVPLSRFLFALGIRHIGEVNARRLAHAYQNYTAFETVAMAATMPYDKVGEEGNEAWLELTNIEGIGPQVGEAIIDFYQEAHNREVLAALLREVTPLDEENVMTASSPIAGKTIVFTGTLARMSRDEAKALAERLGAKTSGSLSKKTDLLVAGSAVGSKLAKAQGLGVEVIDEEAWLQLIEGSYI.

Residues Asp-42–Asp-46, Ser-91–Leu-92, and Glu-125 contribute to the NAD(+) site. Lys-127 (N6-AMP-lysine intermediate) is an active-site residue. NAD(+)-binding residues include Arg-148, Glu-184, Lys-300, and Lys-324. Positions 429, 432, 447, and 453 each coordinate Zn(2+). Residues Thr-638 to Ile-719 form the BRCT domain.

This sequence belongs to the NAD-dependent DNA ligase family. LigA subfamily. Mg(2+) is required as a cofactor. Mn(2+) serves as cofactor.

It carries out the reaction NAD(+) + (deoxyribonucleotide)n-3'-hydroxyl + 5'-phospho-(deoxyribonucleotide)m = (deoxyribonucleotide)n+m + AMP + beta-nicotinamide D-nucleotide.. DNA ligase that catalyzes the formation of phosphodiester linkages between 5'-phosphoryl and 3'-hydroxyl groups in double-stranded DNA using NAD as a coenzyme and as the energy source for the reaction. It is essential for DNA replication and repair of damaged DNA. The sequence is that of DNA ligase from Bartonella quintana (strain Toulouse) (Rochalimaea quintana).